Consider the following 168-residue polypeptide: Disulfide bond formation protein B 1 (168 aa).

The Cytoplasmic segment spans residues 1–14 (MNEQTSRLNRERRF). A helical membrane pass occupies residues 15–31 (LVLLGLICLSLIGGALY). Residues 32–49 (MQVVLGEAPCPLCILQRY) are Periplasmic-facing. Cysteines 41 and 44 form a disulfide. A helical membrane pass occupies residues 50–65 (ALLFIAVFAFIAAAMP). Residues 66-72 (GRRSLTF) are Cytoplasmic-facing. A helical transmembrane segment spans residues 73–89 (FEALVVLSAIGGIVAAG). Residues 90-144 (NHVYILANPMVSCGIDTLQPIVDDLPLAKLWPLAFQVDGFCSTPYPPILGLSLAQ) lie on the Periplasmic side of the membrane. Cysteines 102 and 130 form a disulfide. A helical transmembrane segment spans residues 145-163 (WALVAFVLTAVLVPLGIYR). Topologically, residues 164-168 (NRRQA) are cytoplasmic.

Belongs to the DsbB family.

It is found in the cell inner membrane. Its function is as follows. Required for disulfide bond formation in some periplasmic proteins. Acts by oxidizing the DsbA protein. The sequence is that of Disulfide bond formation protein B 1 (dsbB1) from Pseudomonas putida (strain ATCC 47054 / DSM 6125 / CFBP 8728 / NCIMB 11950 / KT2440).